Here is a 174-residue protein sequence, read N- to C-terminus: Membrane protein NfeD2 (174 aa).

A run of 3 helical transmembrane segments spans residues 16 to 36 (LIIAGSLTLLFLFFGDVFSGL), 47 to 67 (LVLSFFTCFSAGGYIGELVLP), and 72 to 92 (LIALLSCILSIMLVVLLHIFV).

Belongs to the NfeD family.

It localises to the cell membrane. Its subcellular location is the membrane raft. In terms of biological role, plays a role in assembly of FloT membrane rafts, probably recruited to rafts by FloT. This Bacillus subtilis (strain 168) protein is Membrane protein NfeD2.